Here is a 260-residue protein sequence, read N- to C-terminus: MKKGKKLYEGKAKIIYATSDKNLVIQYFKDDATAFNNLKKSTIEGKGVLNNRISEHILSNLTQIGIKNHLVKRLNMREQIIKLVEIIPIEFIVRNVATGSITKRLGIEDGTVLKQPLLEYCLKDDKLGDPLIAEEHILAFDWATKSELEKVKKMILRINDFMIGMFRGVGIKLIDFKLEFGRLKENGKNEVILADEISPDTCRLWDSITDKKLDKDRFRKDLGDLIPAYTEVAKRLGILHEQSNLSAVNVTKLRSVKKRK.

This sequence belongs to the SAICAR synthetase family.

It catalyses the reaction 5-amino-1-(5-phospho-D-ribosyl)imidazole-4-carboxylate + L-aspartate + ATP = (2S)-2-[5-amino-1-(5-phospho-beta-D-ribosyl)imidazole-4-carboxamido]succinate + ADP + phosphate + 2 H(+). It functions in the pathway purine metabolism; IMP biosynthesis via de novo pathway; 5-amino-1-(5-phospho-D-ribosyl)imidazole-4-carboxamide from 5-amino-1-(5-phospho-D-ribosyl)imidazole-4-carboxylate: step 1/2. This is Phosphoribosylaminoimidazole-succinocarboxamide synthase from Pelagibacter ubique (strain HTCC1062).